Here is a 401-residue protein sequence, read N- to C-terminus: Argininosuccinate synthase (401 aa).

ATP is bound by residues 11 to 19 and Ala38; that span reads AYSGGLDTS. L-citrulline-binding residues include Tyr89 and Ser94. Gly119 contacts ATP. The L-aspartate site is built by Thr121, Asn125, and Asp126. Asn125 provides a ligand contact to L-citrulline. L-citrulline-binding residues include Arg129, Ser177, Ser186, Glu262, and Tyr274.

The protein belongs to the argininosuccinate synthase family. Type 1 subfamily. As to quaternary structure, homotetramer.

The protein resides in the cytoplasm. The catalysed reaction is L-citrulline + L-aspartate + ATP = 2-(N(omega)-L-arginino)succinate + AMP + diphosphate + H(+). It functions in the pathway amino-acid biosynthesis; L-arginine biosynthesis; L-arginine from L-ornithine and carbamoyl phosphate: step 2/3. In Nitratidesulfovibrio vulgaris (strain DSM 19637 / Miyazaki F) (Desulfovibrio vulgaris), this protein is Argininosuccinate synthase.